We begin with the raw amino-acid sequence, 378 residues long: MDLIGLLKSQFLCHLVFCYVFIASGLIVNAIQLCTLVIWPINKQLFRKINARLCYCVSSQLVMLLEWWSGTECTIYTDPKASPHYGKENAIVVLNHKFEIDFLCGWSLAERLGILGNSKVLAKKELAYVPIIGWMWYFVEMIFCTRKWEQDRQTVAKSLLHLRDYPEKYLFLIHCEGTRFTEKKHQISMQVAQAKGLPSLKHHLLPRTKGFAITVKCLRDVVPAVYDCTLNFRNNENPTLLGVLNGKKYHADCYVRRIPMEDIPEDEDKCSAWLHKLYQEKDAFQEEYYRTGVFPETPWVPPRRPWSLVNWLFWASLLLYPFFQFLVSMVSSGSSVTLASLVLIFCMASMGVRWMIGVTEIDKGSAYGNIDNKRKQTD.

A helical transmembrane segment spans residues 11-31; the sequence is FLCHLVFCYVFIASGLIVNAI. The HXXXXD motif signature appears at 96-101; sequence HKFEID. Transmembrane regions (helical) follow at residues 125-145, 311-331, and 338-358; these read ELAY…IFCT, WLFW…SMVS, and LASL…MIGV.

Belongs to the 1-acyl-sn-glycerol-3-phosphate acyltransferase family.

Its subcellular location is the endoplasmic reticulum membrane. The catalysed reaction is a 1-acyl-sn-glycero-3-phosphate + an acyl-CoA = a 1,2-diacyl-sn-glycero-3-phosphate + CoA. It catalyses the reaction (4Z,7Z,10Z,13Z,16Z,19Z)-docosahexaenoyl-CoA + 1-hexadecanoyl-sn-glycero-3-phosphate = 1-hexadecanoyl-2-(4Z,7Z,10Z,13Z,16Z,19Z-docosahexaenoyl)-sn-glycero-3-phosphate + CoA. It carries out the reaction 1-octadecanoyl-sn-glycero-3-phosphate + (9Z,12Z)-octadecadienoyl-CoA = 1-octadecanoyl-2-(9Z,12Z-octadecadienoyl)-sn-glycero-3-phosphate + CoA. The enzyme catalyses 1-octadecanoyl-sn-glycero-3-phosphate + (4Z,7Z,10Z,13Z,16Z,19Z)-docosahexaenoyl-CoA = 1-octadecanoyl-2-(4Z,7Z,10Z,13Z,16Z,19Z-docosahexaenoyl)-sn-glycero-3-phosphate + CoA. The catalysed reaction is (4Z,7Z,10Z,13Z,16Z,19Z)-docosahexaenoyl-CoA + 1-(9Z-octadecenoyl)-sn-glycero-3-phosphate = 1-(9Z-octadecenoyl)-2-(4Z,7Z,10Z,13Z,16Z,19Z-docosahexaenoyl)-sn-glycero-3-phosphate + CoA. It participates in phospholipid metabolism; CDP-diacylglycerol biosynthesis; CDP-diacylglycerol from sn-glycerol 3-phosphate: step 2/3. Converts 1-acyl-sn-glycerol-3-phosphate (lysophosphatidic acid or LPA) into 1,2-diacyl-sn-glycerol-3-phosphate (phosphatidic acid or PA) by incorporating an acyl moiety at the sn-2 position of the glycerol backbone. Exhibits high acyl-CoA specificity for polyunsaturated fatty acyl-CoA, especially docosahexaenoyl-CoA (22:6-CoA, DHA-CoA). This is 1-acyl-sn-glycerol-3-phosphate acyltransferase delta (Agpat4) from Rattus norvegicus (Rat).